The primary structure comprises 222 residues: Ribonuclease S-3 (222 aa).

The N-terminal stretch at 1–22 is a signal peptide; it reads MVHVVMMVFLLIVLILCSSTVG. Position 31 (Gln31) interacts with RNA. Cys37 and Cys44 are disulfide-bonded. Asn40 carries an N-linked (GlcNAc...) asparagine glycan. RNA-binding positions include His55, 92–93, Phe102, 105–106, and 109–110; these read NV, KE, and KH. Residue His55 is the Proton donor of the active site. Cys70 and Cys113 are oxidised to a cystine. Residues Glu106 and Lys109 contribute to the active site. His110 acts as the Proton acceptor in catalysis. A glycan (N-linked (GlcNAc...) asparagine) is linked at Asn138. Intrachain disulfides connect Cys177-Cys215 and Cys192-Cys203.

The protein belongs to the RNase T2 family. In terms of processing, N-linked core structure at Asn-138 contains xylose.

The enzyme catalyses a ribonucleotidyl-ribonucleotide-RNA + H2O = a 3'-end 3'-phospho-ribonucleotide-RNA + a 5'-end dephospho-ribonucleoside-RNA + H(+). Self-incompatibility (SI) is the inherited ability of a flowering plant to prevent self-fertilization by discriminating between self and non-self pollen during pollination. In many species, self-incompatibility is controlled by the single, multiallelic locus S. This Pyrus pyrifolia (Chinese pear) protein is Ribonuclease S-3.